The chain runs to 422 residues: Glucosylglycerol-phosphate phosphatase (422 aa).

Aspartate 403 functions as the Proton donor in the catalytic mechanism.

This sequence belongs to the histidine acid phosphatase family. Monomer. Interacts with GGPS.

The catalysed reaction is 2-O-(alpha-D-glucopyranosyl)-sn-glycerol 3-phosphate + H2O = 2-O-(alpha-D-glucopyranosyl)glycerol + phosphate. In terms of biological role, phosphorylates glucosylglycerol-phosphate the precursor of the osmoprotectant glucosylglycerol necessary for salt adaptation of Synechocystis. The protein is Glucosylglycerol-phosphate phosphatase (stpA) of Synechocystis sp. (strain ATCC 27184 / PCC 6803 / Kazusa).